The chain runs to 291 residues: Protein ZAR1-like (291 aa).

The segment at 103 to 152 is disordered; that stretch reads GSQTLHSSSLSDRTSSRKPTEAWEVGRRALIRRPQDGEDEESQEELTGPT. Over residues 106-115 the composition is skewed to low complexity; that stretch reads TLHSSSLSDR. Positions 116-129 are enriched in basic and acidic residues; it reads TSSRKPTEAWEVGR. The 3CxxC-type zinc-finger motif lies at 195–280; it reads LKYGYFHCKD…QELCGHCKDK (86 aa).

It belongs to the ZAR1 family. As to quaternary structure, interacts with YBX2. In terms of tissue distribution, expressed in oocytes and zygotes. Predominantly expressed in maturing oocytes before maternal-to-zygotic transition (MZT). Less abundant than Zar1.

It localises to the cytoplasm. The protein localises to the cytoplasmic ribonucleoprotein granule. MRNA-binding protein required for maternal mRNA storage, translation and degradation during oocyte maturation. Probably promotes formation of some phase-separated membraneless compartment that stores maternal mRNAs in oocytes: acts by undergoing liquid-liquid phase separation upon binding to maternal mRNAs. Binds to the 3'-UTR of maternal mRNAs, inhibiting their translation. The polypeptide is Protein ZAR1-like (Mus musculus (Mouse)).